A 154-amino-acid chain; its full sequence is CS6 fimbrial subunit A (154 aa).

An N-terminal signal peptide occupies residues 1–18; it reads MKKTIGLILILASFGSHA.

Its subcellular location is the fimbrium. Its function is as follows. Fimbriae (also called pili), polar filaments radiating from the surface of the bacterium to a length of 0.5-1.5 micrometers and numbering 100-300 per cell, enable bacteria to colonize the epithelium of specific host organs. The protein is CS6 fimbrial subunit A (cssA) of Escherichia coli.